The sequence spans 493 residues: Glutamate--tRNA ligase (493 aa).

Residues proline 10–threonine 20 carry the 'HIGH' region motif. The 'KMSKS' region signature appears at lysine 251 to arginine 255. Residue lysine 254 participates in ATP binding.

It belongs to the class-I aminoacyl-tRNA synthetase family. Glutamate--tRNA ligase type 1 subfamily. As to quaternary structure, monomer.

It localises to the cytoplasm. It catalyses the reaction tRNA(Glu) + L-glutamate + ATP = L-glutamyl-tRNA(Glu) + AMP + diphosphate. In terms of biological role, catalyzes the attachment of glutamate to tRNA(Glu) in a two-step reaction: glutamate is first activated by ATP to form Glu-AMP and then transferred to the acceptor end of tRNA(Glu). This is Glutamate--tRNA ligase from Pseudomonas putida (strain ATCC 700007 / DSM 6899 / JCM 31910 / BCRC 17059 / LMG 24140 / F1).